Here is a 154-residue protein sequence, read N- to C-terminus: Endoribonuclease YbeY (154 aa).

Residues histidine 120, histidine 124, and histidine 130 each coordinate Zn(2+).

This sequence belongs to the endoribonuclease YbeY family. Zn(2+) is required as a cofactor.

The protein resides in the cytoplasm. Its function is as follows. Single strand-specific metallo-endoribonuclease involved in late-stage 70S ribosome quality control and in maturation of the 3' terminus of the 16S rRNA. The polypeptide is Endoribonuclease YbeY (Oceanobacillus iheyensis (strain DSM 14371 / CIP 107618 / JCM 11309 / KCTC 3954 / HTE831)).